A 225-amino-acid chain; its full sequence is UPF0758 protein XOO0495 (225 aa).

Residues 102–224 (ALSDPPSVGR…PVSLAERGWL (123 aa)) enclose the MPN domain. Residues His-173, His-175, and Asp-186 each contribute to the Zn(2+) site. The short motif at 173–186 (HNHPSGNPEPSKAD) is the JAMM motif element.

It belongs to the UPF0758 family.

This is UPF0758 protein XOO0495 from Xanthomonas oryzae pv. oryzae (strain KACC10331 / KXO85).